The sequence spans 256 residues: MNNAIFPNKFKAALAAQQVQIGCWSALASPITTEVLGLAGFDWLVLDGEHAPNDVTTLIPQLMALKGSASAPVVRVPTNEPVIIKRMLDIGFYNFLIPFVETQEEAARAVASTRYPPEGIRGVSVSHRANMFGTVPDYFAQSNKNITIIVQIESQLGVDNVDAIAATEGVDGIFVGPSDLAAALGHLGNASHPDVQQTIQHIFARAKAHGKSCGILAPVEADARRYLEWGATFVAVGSDLGAFRASTQKLADTFKK.

The Proton acceptor role is filled by H50. Q151 serves as a coordination point for substrate. Mg(2+) is bound at residue E153. The substrate site is built by S178 and D179. D179 contributes to the Mg(2+) binding site.

This sequence belongs to the HpcH/HpaI aldolase family. KDGluc aldolase subfamily. Homohexamer; trimer of dimers. Mg(2+) serves as cofactor.

It carries out the reaction 5-dehydro-4-deoxy-D-glucarate = 2-hydroxy-3-oxopropanoate + pyruvate. The catalysed reaction is 2-dehydro-3-deoxy-D-glucarate = 2-hydroxy-3-oxopropanoate + pyruvate. It functions in the pathway carbohydrate acid metabolism; galactarate degradation; D-glycerate from galactarate: step 2/3. Its function is as follows. Catalyzes the reversible retro-aldol cleavage of both 5-keto-4-deoxy-D-glucarate and 2-keto-3-deoxy-D-glucarate to pyruvate and tartronic semialdehyde. This chain is 5-keto-4-deoxy-D-glucarate aldolase, found in Salmonella paratyphi C (strain RKS4594).